The primary structure comprises 387 residues: Succinate--CoA ligase [ADP-forming] subunit beta (387 aa).

The 237-residue stretch at 9–245 (KDLLESYGLK…KSQENAKELK (237 aa)) folds into the ATP-grasp domain. ATP contacts are provided by residues K46, 53-55 (GRG), E100, Y103, and E108. 2 residues coordinate Mg(2+): N200 and D214. Substrate contacts are provided by residues N265 and 322 to 324 (GIV).

The protein belongs to the succinate/malate CoA ligase beta subunit family. Heterotetramer of two alpha and two beta subunits. The cofactor is Mg(2+).

It carries out the reaction succinate + ATP + CoA = succinyl-CoA + ADP + phosphate. The enzyme catalyses GTP + succinate + CoA = succinyl-CoA + GDP + phosphate. It functions in the pathway carbohydrate metabolism; tricarboxylic acid cycle; succinate from succinyl-CoA (ligase route): step 1/1. Succinyl-CoA synthetase functions in the citric acid cycle (TCA), coupling the hydrolysis of succinyl-CoA to the synthesis of either ATP or GTP and thus represents the only step of substrate-level phosphorylation in the TCA. The beta subunit provides nucleotide specificity of the enzyme and binds the substrate succinate, while the binding sites for coenzyme A and phosphate are found in the alpha subunit. This chain is Succinate--CoA ligase [ADP-forming] subunit beta, found in Francisella tularensis subsp. novicida (strain U112).